A 413-amino-acid polypeptide reads, in one-letter code: PCI domain-containing protein 2 homolog (413 aa).

In terms of domain architecture, PCI spans 222 to 403 (VAYNYFLGRK…QKLVISKMNA (182 aa)).

It belongs to the CSN12 family.

The sequence is that of PCI domain-containing protein 2 homolog from Caenorhabditis elegans.